Here is a 75-residue protein sequence, read N- to C-terminus: DNA-directed RNA polymerase subunit omega (75 aa).

It belongs to the RNA polymerase subunit omega family. In terms of assembly, in cyanobacteria the RNAP catalytic core is composed of 2 alpha, 1 beta, 1 beta', 1 gamma and 1 omega subunit. When a sigma factor is associated with the core the holoenzyme is formed, which can initiate transcription.

The catalysed reaction is RNA(n) + a ribonucleoside 5'-triphosphate = RNA(n+1) + diphosphate. Functionally, promotes RNA polymerase assembly. Latches the N- and C-terminal regions of the beta' subunit thereby facilitating its interaction with the beta and alpha subunits. The sequence is that of DNA-directed RNA polymerase subunit omega from Gloeothece citriformis (strain PCC 7424) (Cyanothece sp. (strain PCC 7424)).